Here is a 64-residue protein sequence, read N- to C-terminus: Large ribosomal subunit protein bL28C (64 aa).

This sequence belongs to the bacterial ribosomal protein bL28 family.

This Mycobacterium tuberculosis (strain ATCC 25618 / H37Rv) protein is Large ribosomal subunit protein bL28C.